Consider the following 414-residue polypeptide: Tyrosine--tRNA ligase (414 aa).

Tyr-38 serves as a coordination point for L-tyrosine. The 'HIGH' region signature appears at 43 to 52 (PTATSLHLGN). Tyr-165 and Gln-169 together coordinate L-tyrosine. The 'KMSKS' region signature appears at 228 to 232 (KFGKS). An ATP-binding site is contributed by Lys-231. The region spanning 349 to 414 (FNANQIIDLG…KKYFFIIELI (66 aa)) is the S4 RNA-binding domain.

The protein belongs to the class-I aminoacyl-tRNA synthetase family. TyrS type 1 subfamily. As to quaternary structure, homodimer.

The protein resides in the cytoplasm. The enzyme catalyses tRNA(Tyr) + L-tyrosine + ATP = L-tyrosyl-tRNA(Tyr) + AMP + diphosphate + H(+). Functionally, catalyzes the attachment of tyrosine to tRNA(Tyr) in a two-step reaction: tyrosine is first activated by ATP to form Tyr-AMP and then transferred to the acceptor end of tRNA(Tyr). The chain is Tyrosine--tRNA ligase from Mesomycoplasma hyopneumoniae (strain 232) (Mycoplasma hyopneumoniae).